The chain runs to 342 residues: UDP-3-O-(3-hydroxymyristoyl)glucosamine N-acyltransferase (342 aa).

His239 serves as the catalytic Proton acceptor.

The protein belongs to the transferase hexapeptide repeat family. LpxD subfamily. In terms of assembly, homotrimer.

It carries out the reaction a UDP-3-O-[(3R)-3-hydroxyacyl]-alpha-D-glucosamine + a (3R)-hydroxyacyl-[ACP] = a UDP-2-N,3-O-bis[(3R)-3-hydroxyacyl]-alpha-D-glucosamine + holo-[ACP] + H(+). The enzyme catalyses UDP-3-O-[(3R)-3-hydroxytetradecanoyl]-alpha-D-glucosamine + (3R)-hydroxytetradecanoyl-[ACP] = UDP-2-N,3-O-bis[(3R)-3-hydroxytetradecanoyl]-alpha-D-glucosamine + holo-[ACP] + H(+). It functions in the pathway glycolipid biosynthesis; lipid IV(A) biosynthesis; lipid IV(A) from (3R)-3-hydroxytetradecanoyl-[acyl-carrier-protein] and UDP-N-acetyl-alpha-D-glucosamine: step 3/6. Catalyzes the N-acylation of UDP-3-O-(hydroxytetradecanoyl)glucosamine using 3-hydroxytetradecanoyl-ACP as the acyl donor. Is involved in the biosynthesis of lipid A, a phosphorylated glycolipid that anchors the lipopolysaccharide to the outer membrane of the cell. This chain is UDP-3-O-(3-hydroxymyristoyl)glucosamine N-acyltransferase, found in Photorhabdus laumondii subsp. laumondii (strain DSM 15139 / CIP 105565 / TT01) (Photorhabdus luminescens subsp. laumondii).